Consider the following 511-residue polypeptide: 2,3-bisphosphoglycerate-independent phosphoglycerate mutase (511 aa).

The Mn(2+) site is built by aspartate 14 and serine 64. The Phosphoserine intermediate role is filled by serine 64. Substrate-binding positions include histidine 125, 155–156, arginine 187, arginine 193, 259–262, and lysine 333; these read RD and RADR. Residues aspartate 400, histidine 404, aspartate 441, histidine 442, and histidine 460 each contribute to the Mn(2+) site.

The protein belongs to the BPG-independent phosphoglycerate mutase family. As to quaternary structure, monomer. Mn(2+) serves as cofactor.

It catalyses the reaction (2R)-2-phosphoglycerate = (2R)-3-phosphoglycerate. The protein operates within carbohydrate degradation; glycolysis; pyruvate from D-glyceraldehyde 3-phosphate: step 3/5. In terms of biological role, catalyzes the interconversion of 2-phosphoglycerate and 3-phosphoglycerate. In Pseudomonas entomophila (strain L48), this protein is 2,3-bisphosphoglycerate-independent phosphoglycerate mutase.